A 531-amino-acid polypeptide reads, in one-letter code: NADH-quinone oxidoreductase subunit N (531 aa).

A run of 14 helical transmembrane segments spans residues 8-28, 41-61, 81-101, 146-166, 172-192, 208-228, 250-270, 282-302, 318-338, 350-370, 372-392, 418-438, 453-473, and 500-520; these read VEYF…AGVL, AQVT…IVVA, ATLF…VFMA, GATQ…MMVF, LLTM…MCGL, FLLG…LYGA, ALAG…AVPF, PTPI…GALL, PVLW…AVNQ, VAHV…GLSA, LFYL…VGLV, IVGV…LTSG, GAVP…YFYV, and AAIA…QPVL.

The protein belongs to the complex I subunit 2 family. In terms of assembly, NDH-1 is composed of 14 different subunits. Subunits NuoA, H, J, K, L, M, N constitute the membrane sector of the complex.

It localises to the cell membrane. The catalysed reaction is a quinone + NADH + 5 H(+)(in) = a quinol + NAD(+) + 4 H(+)(out). NDH-1 shuttles electrons from NADH, via FMN and iron-sulfur (Fe-S) centers, to quinones in the respiratory chain. The immediate electron acceptor for the enzyme in this species is believed to be a menaquinone. Couples the redox reaction to proton translocation (for every two electrons transferred, four hydrogen ions are translocated across the cytoplasmic membrane), and thus conserves the redox energy in a proton gradient. The chain is NADH-quinone oxidoreductase subunit N from Mycobacterium tuberculosis (strain CDC 1551 / Oshkosh).